Consider the following 99-residue polypeptide: Small ribosomal subunit protein uS14m (99 aa).

Belongs to the universal ribosomal protein uS14 family.

The protein resides in the mitochondrion. This chain is Small ribosomal subunit protein uS14m (RPS14), found in Acanthamoeba castellanii (Amoeba).